The sequence spans 120 residues: Large ribosomal subunit protein uL24 (120 aa).

This sequence belongs to the universal ribosomal protein uL24 family. As to quaternary structure, part of the 50S ribosomal subunit.

One of two assembly initiator proteins, it binds directly to the 5'-end of the 23S rRNA, where it nucleates assembly of the 50S subunit. In terms of biological role, located at the polypeptide exit tunnel on the outside of the subunit. In Archaeoglobus fulgidus (strain ATCC 49558 / DSM 4304 / JCM 9628 / NBRC 100126 / VC-16), this protein is Large ribosomal subunit protein uL24.